A 320-amino-acid polypeptide reads, in one-letter code: Mitochondrial thiamine pyrophosphate carrier (320 aa).

Solcar repeat units lie at residues 13-106, 116-202, and 214-309; these read NTKL…LTEL, REFS…LKHL, and NENL…FCNV. A helical membrane pass occupies residues 19–39; that stretch reads AVAGSVSGLVTRALISPFDVI. Serine 51 bears the Phosphoserine mark. Transmembrane regions (helical) follow at residues 87–107, 122–142, 173–193, and 220–240; these read ILSI…TELV, FVCG…VDVL, VFYK…GLQF, and LLCG…LDLF. Residues 241 to 246 carry the Substrate recognition motif; sequence KKRLQV. A helical transmembrane segment spans residues 293–313; sequence ALSTGFMFFWYEFFCNVFHCM.

Belongs to the mitochondrial carrier (TC 2.A.29) family.

Its subcellular location is the mitochondrion membrane. It carries out the reaction thiamine phosphate(out) + thiamine diphosphate(in) = thiamine phosphate(in) + thiamine diphosphate(out). Functionally, mitochondrial transporter mediating uptake of thiamine diphosphate into mitochondria. It is not clear if the antiporter activity is affected by the membrane potential or by the proton electrochemical gradient. The protein is Mitochondrial thiamine pyrophosphate carrier (SLC25A19) of Macaca fascicularis (Crab-eating macaque).